Consider the following 452-residue polypeptide: tRNA(Ile)-lysidine synthase (452 aa).

ATP is bound at residue 27 to 32; that stretch reads SGGIDS.

This sequence belongs to the tRNA(Ile)-lysidine synthase family.

Its subcellular location is the cytoplasm. The enzyme catalyses cytidine(34) in tRNA(Ile2) + L-lysine + ATP = lysidine(34) in tRNA(Ile2) + AMP + diphosphate + H(+). In terms of biological role, ligates lysine onto the cytidine present at position 34 of the AUA codon-specific tRNA(Ile) that contains the anticodon CAU, in an ATP-dependent manner. Cytidine is converted to lysidine, thus changing the amino acid specificity of the tRNA from methionine to isoleucine. This Persephonella marina (strain DSM 14350 / EX-H1) protein is tRNA(Ile)-lysidine synthase.